A 368-amino-acid chain; its full sequence is UDP-N-acetylglucosamine--N-acetylmuramyl-(pentapeptide) pyrophosphoryl-undecaprenol N-acetylglucosamine transferase (368 aa).

Residues 11–13 (TGG), Asn-123, Arg-164, Ser-188, Ile-250, and Gln-295 each bind UDP-N-acetyl-alpha-D-glucosamine.

The protein belongs to the glycosyltransferase 28 family. MurG subfamily.

It is found in the cell inner membrane. It catalyses the reaction di-trans,octa-cis-undecaprenyl diphospho-N-acetyl-alpha-D-muramoyl-L-alanyl-D-glutamyl-meso-2,6-diaminopimeloyl-D-alanyl-D-alanine + UDP-N-acetyl-alpha-D-glucosamine = di-trans,octa-cis-undecaprenyl diphospho-[N-acetyl-alpha-D-glucosaminyl-(1-&gt;4)]-N-acetyl-alpha-D-muramoyl-L-alanyl-D-glutamyl-meso-2,6-diaminopimeloyl-D-alanyl-D-alanine + UDP + H(+). It functions in the pathway cell wall biogenesis; peptidoglycan biosynthesis. In terms of biological role, cell wall formation. Catalyzes the transfer of a GlcNAc subunit on undecaprenyl-pyrophosphoryl-MurNAc-pentapeptide (lipid intermediate I) to form undecaprenyl-pyrophosphoryl-MurNAc-(pentapeptide)GlcNAc (lipid intermediate II). The sequence is that of UDP-N-acetylglucosamine--N-acetylmuramyl-(pentapeptide) pyrophosphoryl-undecaprenol N-acetylglucosamine transferase from Solidesulfovibrio magneticus (strain ATCC 700980 / DSM 13731 / RS-1) (Desulfovibrio magneticus).